We begin with the raw amino-acid sequence, 227 residues long: Zinc finger protein 511 (227 aa).

3 C2H2-type zinc fingers span residues 80–105 (FTCQ…HMMH), 107–130 (NTCS…LEWH), and 144–169 (YQCL…VRLH). Residues 180 to 204 (PKTNRGPAMPAAADAATRAPTDDSD) are disordered. The span at 186–198 (PAMPAAADAATRA) shows a compositional bias: low complexity.

The protein belongs to the krueppel C2H2-type zinc-finger protein family.

The protein localises to the nucleus. In terms of biological role, may be involved in transcriptional regulation. The chain is Zinc finger protein 511 (Znf511) from Mus musculus (Mouse).